A 367-amino-acid polypeptide reads, in one-letter code: Chorismate synthase (367 aa).

R48 is a binding site for NADP(+). FMN-binding positions include 125 to 127 (RSS), 243 to 244 (NA), G283, 298 to 302 (KPTSS), and R324.

The protein belongs to the chorismate synthase family. As to quaternary structure, homotetramer. The cofactor is FMNH2.

The catalysed reaction is 5-O-(1-carboxyvinyl)-3-phosphoshikimate = chorismate + phosphate. Its pathway is metabolic intermediate biosynthesis; chorismate biosynthesis; chorismate from D-erythrose 4-phosphate and phosphoenolpyruvate: step 7/7. Catalyzes the anti-1,4-elimination of the C-3 phosphate and the C-6 proR hydrogen from 5-enolpyruvylshikimate-3-phosphate (EPSP) to yield chorismate, which is the branch point compound that serves as the starting substrate for the three terminal pathways of aromatic amino acid biosynthesis. This reaction introduces a second double bond into the aromatic ring system. In Psychrobacter arcticus (strain DSM 17307 / VKM B-2377 / 273-4), this protein is Chorismate synthase.